The sequence spans 298 residues: MSNAREIRSKVQSVKNTQKITGAMELVAASKMRGAIVKMNNVRPYVESANTIIKNVTAASIDYPNPYLFDRDVKRVGYIVISTDRGLCGGLNINLFKHVLKEIKNNIEDRVGVDVCVIGSKAENFFAKLKDVNIVATAHYNDKDKEGSIRAIGGAVKVMLDKFTAGEIDRLYMSSNQFVSTIKQRPRLQTLLPIQDIFSAEEIKANKEKATKGHWDYIYERDIEEVLNALCIRYIEAQVRGAILENAACEQAARMMAMKNATDNASDIIDQLKLDYNKVRQAMITQELAEICSGAAAV.

This sequence belongs to the ATPase gamma chain family. As to quaternary structure, F-type ATPases have 2 components, CF(1) - the catalytic core - and CF(0) - the membrane proton channel. CF(1) has five subunits: alpha(3), beta(3), gamma(1), delta(1), epsilon(1). CF(0) has three main subunits: a, b and c.

It is found in the cell inner membrane. Produces ATP from ADP in the presence of a proton gradient across the membrane. The gamma chain is believed to be important in regulating ATPase activity and the flow of protons through the CF(0) complex. This is ATP synthase gamma chain from Francisella tularensis subsp. mediasiatica (strain FSC147).